Here is a 400-residue protein sequence, read N- to C-terminus: Nicotinate phosphoribosyltransferase (400 aa).

A Phosphohistidine; by autocatalysis modification is found at H220.

It belongs to the NAPRTase family. Transiently phosphorylated on a His residue during the reaction cycle. Phosphorylation strongly increases the affinity for substrates and increases the rate of nicotinate D-ribonucleotide production. Dephosphorylation regenerates the low-affinity form of the enzyme, leading to product release.

It catalyses the reaction nicotinate + 5-phospho-alpha-D-ribose 1-diphosphate + ATP + H2O = nicotinate beta-D-ribonucleotide + ADP + phosphate + diphosphate. The protein operates within cofactor biosynthesis; NAD(+) biosynthesis; nicotinate D-ribonucleotide from nicotinate: step 1/1. In terms of biological role, catalyzes the synthesis of beta-nicotinate D-ribonucleotide from nicotinate and 5-phospho-D-ribose 1-phosphate at the expense of ATP. This Enterobacter sp. (strain 638) protein is Nicotinate phosphoribosyltransferase.